Reading from the N-terminus, the 250-residue chain is Triosephosphate isomerase (250 aa).

9 to 11 (NWK) is a substrate binding site. The active-site Electrophile is the H95. The active-site Proton acceptor is E167. Substrate-binding positions include G173, S212, and 233 to 234 (GG).

The protein belongs to the triosephosphate isomerase family. In terms of assembly, homodimer.

The protein localises to the cytoplasm. It catalyses the reaction D-glyceraldehyde 3-phosphate = dihydroxyacetone phosphate. The protein operates within carbohydrate biosynthesis; gluconeogenesis. It participates in carbohydrate degradation; glycolysis; D-glyceraldehyde 3-phosphate from glycerone phosphate: step 1/1. Functionally, involved in the gluconeogenesis. Catalyzes stereospecifically the conversion of dihydroxyacetone phosphate (DHAP) to D-glyceraldehyde-3-phosphate (G3P). This is Triosephosphate isomerase from Nitrosococcus oceani (strain ATCC 19707 / BCRC 17464 / JCM 30415 / NCIMB 11848 / C-107).